Here is a 270-residue protein sequence, read N- to C-terminus: tRNA pseudouridine synthase A (270 aa).

Asp-60 (nucleophile) is an active-site residue. The RNA binding stretch occupies residues Phe-107–Phe-111. Tyr-118 lines the substrate pocket. The interval Gln-168–Arg-172 is interaction with tRNA.

It belongs to the tRNA pseudouridine synthase TruA family. Homodimer.

It carries out the reaction uridine(38/39/40) in tRNA = pseudouridine(38/39/40) in tRNA. Its function is as follows. Formation of pseudouridine at positions 38, 39 and 40 in the anticodon stem and loop of transfer RNAs. This Enterobacter sp. (strain 638) protein is tRNA pseudouridine synthase A.